Reading from the N-terminus, the 833-residue chain is Leucine--tRNA ligase (833 aa).

The short motif at 41-52 (PYPSGAGLHVGH) is the 'HIGH' region element. The 'KMSKS' region motif lies at 610-614 (KMSKS). K613 lines the ATP pocket.

Belongs to the class-I aminoacyl-tRNA synthetase family.

Its subcellular location is the cytoplasm. The enzyme catalyses tRNA(Leu) + L-leucine + ATP = L-leucyl-tRNA(Leu) + AMP + diphosphate. The protein is Leucine--tRNA ligase of Streptococcus suis (strain 98HAH33).